A 139-amino-acid polypeptide reads, in one-letter code: Large-conductance mechanosensitive channel (139 aa).

3 helical membrane passes run Val-16 to Leu-36, Ile-40 to Val-60, and Gly-79 to Val-99.

Belongs to the MscL family. In terms of assembly, homopentamer.

The protein resides in the cell inner membrane. Functionally, channel that opens in response to stretch forces in the membrane lipid bilayer. May participate in the regulation of osmotic pressure changes within the cell. In Phenylobacterium zucineum (strain HLK1), this protein is Large-conductance mechanosensitive channel.